Reading from the N-terminus, the 2663-residue chain is Ankyrin repeat domain-containing protein 11 (2663 aa).

Disordered regions lie at residues 1 to 90 (MPKG…KEPV) and 128 to 169 (SANS…ERGE). Composition is skewed to basic and acidic residues over residues 21 to 54 (MVEK…VRER) and 69 to 90 (EQKD…KEPV). Positions 128–155 (SANSPVDTTPKHPSQSTVCQKGTPNSAS) are enriched in polar residues. Residues 156–169 (KTKDKVNKRNERGE) show a composition bias toward basic and acidic residues. ANK repeat units follow at residues 167–196 (RGET…DVNV), 200–229 (AGWT…EVNT), 233–262 (DDDT…NPQQ), and 266–292 (KGET…YTSS). Serine 276 is modified (phosphoserine). Disordered regions lie at residues 289–380 (YTSS…SNSF), 398–647 (APKK…GQCS), and 723–783 (DTNK…NDLK). Over residues 295-305 (SSTESSEEEDA) the composition is skewed to acidic residues. Positions 309–320 (APSSSVDGNNTD) are enriched in polar residues. The segment covering 356–376 (DRVPPVDDKHLLKKDYRKETK) has biased composition (basic and acidic residues). Position 408 is a phosphoserine (serine 408). Residue threonine 410 is modified to Phosphothreonine. The residue at position 411 (serine 411) is a Phosphoserine. The segment covering 438–451 (KTREPSNAKQQKEK) has biased composition (basic and acidic residues). The segment covering 452 to 462 (NKVKKKRKKET) has biased composition (basic residues). Positions 463 to 477 (KGREVRFGKRSDKFC) are enriched in basic and acidic residues. A compositionally biased stretch (acidic residues) spans 481 to 493 (SESESSESGEDDR). The span at 513-531 (SLFSSLSASSTSSHGSSAA) shows a compositional bias: low complexity. The segment covering 539 to 550 (TDQHTKHWRTDN) has biased composition (basic and acidic residues). Residues 551–562 (WKTISSPAWSEV) are compositionally biased toward polar residues. Over residues 576–588 (ESDYSSEGSSVES) the composition is skewed to low complexity. 2 stretches are compositionally biased toward basic residues: residues 591–602 (PVRKRQEHRKRA) and 629–641 (VKKH…HKNK). Serine 834 carries the post-translational modification Phosphoserine. Basic and acidic residues-rich tracts occupy residues 881 to 928 (VKED…EKHK), 935 to 1043 (SEKD…KSIL), 1059 to 1090 (KKDT…KEKA), and 1099 to 1112 (FSEK…KEKS). 2 disordered regions span residues 881–1043 (VKED…KSIL) and 1059–1393 (KKDT…GQYE). Serine 1079 is modified (phosphoserine). Threonine 1120 carries the phosphothreonine modification. Serine 1123 is subject to Phosphoserine. Basic and acidic residues-rich tracts occupy residues 1142–1301 (DLPR…DKIS), 1330–1347 (GDDK…LKEK), and 1359–1393 (KSHD…GQYE). A Phosphothreonine modification is found at threonine 1419. 5 stretches are compositionally biased toward basic and acidic residues: residues 1424–1446 (STEK…KELK), 1466–1545 (REKW…KGDP), 1556–1574 (APSK…KLLG), 1587–1597 (LSQKDLEIEER), and 1605–1639 (MKQM…DIPA). Residues 1424-1710 (STEKKDKNDS…TGVPTPTSVL (287 aa)) form a disordered region. Serine 1509 is subject to Phosphoserine. At serine 1692 the chain carries Phosphoserine. Residues 1698 to 1710 (SRPTGVPTPTSVL) show a composition bias toward polar residues. Serine 1792 bears the Phosphoserine mark. The tract at residues 1814 to 1836 (SVPAASSYDSPMPPSMEDRAPLP) is disordered. The residue at position 1847 (serine 1847) is a Phosphoserine. Tyrosine 1850 and tyrosine 1851 each carry phosphotyrosine. Residues serine 1852, serine 1859, and serine 1990 each carry the phosphoserine modification. Disordered regions lie at residues 1988–2019 (PESP…PAPP) and 2131–2406 (LDLG…STQQ). Low complexity-rich tracts occupy residues 2310-2324 (IQPE…AEAP) and 2391-2406 (RSTQ…STQQ). The tract at residues 2369–2663 (AKARGSEDDD…VNDDFVLLPA (295 aa)) is important for protein degradation.

As to quaternary structure, interacts with the PAS region of the p160 coactivators. Post-translationally, subject to proteasomal degradation which is probably essential to regulate its activity.

Its subcellular location is the nucleus. Its function is as follows. Chromatin regulator which modulates histone acetylation and gene expression in neural precursor cells. May recruit histone deacetylases (HDACs) to the p160 coactivators/nuclear receptor complex to inhibit ligand-dependent transactivation. Has a role in proliferation and development of cortical neural precursors. May also regulate bone homeostasis. The chain is Ankyrin repeat domain-containing protein 11 (ANKRD11) from Homo sapiens (Human).